Consider the following 269-residue polypeptide: tRNA-cytidine(32) 2-sulfurtransferase (269 aa).

The PP-loop motif signature appears at 53–58 (SGGKDS). [4Fe-4S] cluster is bound by residues C128, C131, and C218.

The protein belongs to the TtcA family. Homodimer. Mg(2+) serves as cofactor. [4Fe-4S] cluster is required as a cofactor.

The protein localises to the cytoplasm. It catalyses the reaction cytidine(32) in tRNA + S-sulfanyl-L-cysteinyl-[cysteine desulfurase] + AH2 + ATP = 2-thiocytidine(32) in tRNA + L-cysteinyl-[cysteine desulfurase] + A + AMP + diphosphate + H(+). Its pathway is tRNA modification. In terms of biological role, catalyzes the ATP-dependent 2-thiolation of cytidine in position 32 of tRNA, to form 2-thiocytidine (s(2)C32). The sulfur atoms are provided by the cysteine/cysteine desulfurase (IscS) system. In Pelobacter propionicus (strain DSM 2379 / NBRC 103807 / OttBd1), this protein is tRNA-cytidine(32) 2-sulfurtransferase.